The primary structure comprises 902 residues: Protein translocase subunit SecA (902 aa).

ATP-binding positions include Gln-87, 105–109, and Asp-512; that span reads GEGKT. The segment at 847–902 is disordered; that stretch reads DAERLARQQQLSHLDDQSAAAQEMASQTGDRKIGRNDPCPCGSGKKYKQCHGRLNA. 4 residues coordinate Zn(2+): Cys-885, Cys-887, Cys-896, and His-897. Positions 891–902 are enriched in basic residues; sequence KKYKQCHGRLNA.

The protein belongs to the SecA family. In terms of assembly, monomer and homodimer. Part of the essential Sec protein translocation apparatus which comprises SecA, SecYEG and auxiliary proteins SecDF-YajC and YidC. Zn(2+) is required as a cofactor.

Its subcellular location is the cell inner membrane. The protein resides in the cytoplasm. The enzyme catalyses ATP + H2O + cellular proteinSide 1 = ADP + phosphate + cellular proteinSide 2.. Functionally, part of the Sec protein translocase complex. Interacts with the SecYEG preprotein conducting channel. Has a central role in coupling the hydrolysis of ATP to the transfer of proteins into and across the cell membrane, serving both as a receptor for the preprotein-SecB complex and as an ATP-driven molecular motor driving the stepwise translocation of polypeptide chains across the membrane. This chain is Protein translocase subunit SecA, found in Edwardsiella ictaluri (strain 93-146).